Here is a 325-residue protein sequence, read N- to C-terminus: uncharacterized protein (325 aa).

A disordered region spans residues methionine 1–glutamine 75. Composition is skewed to pro residues over residues tyrosine 24–glycine 39 and tyrosine 50–tyrosine 70. Helical transmembrane passes span alanine 96–alanine 116, isoleucine 153–isoleucine 173, leucine 205–phenylalanine 225, and leucine 273–isoleucine 293.

It localises to the cell membrane. This is an uncharacterized protein from Mycobacterium tuberculosis (strain CDC 1551 / Oshkosh).